A 104-amino-acid polypeptide reads, in one-letter code: AIADGTSMITENVFEARFRFVEEMIRLGADARTDGHHAVVRGIPQLSSAPVWSSDIRAGAGLVLAGLVADGETEVHDVFHIDRGYPLFVENLVSLGAEIERVSS.

Valine 13 provides a ligand contact to UDP-N-acetyl-alpha-D-glucosamine.

This sequence belongs to the EPSP synthase family. MurA subfamily.

The protein localises to the cytoplasm. It catalyses the reaction phosphoenolpyruvate + UDP-N-acetyl-alpha-D-glucosamine = UDP-N-acetyl-3-O-(1-carboxyvinyl)-alpha-D-glucosamine + phosphate. It participates in cell wall biogenesis; peptidoglycan biosynthesis. Functionally, cell wall formation. Adds enolpyruvyl to UDP-N-acetylglucosamine. This Mycolicibacterium smegmatis (Mycobacterium smegmatis) protein is UDP-N-acetylglucosamine 1-carboxyvinyltransferase (murA).